A 297-amino-acid polypeptide reads, in one-letter code: 6-dehydroglucose reductase (297 aa).

NADP(+) is bound by residues tryptophan 20, arginine 21, and aspartate 49. The active-site Proton donor is the tyrosine 54. D-glucose is bound by residues tyrosine 54, lysine 98, histidine 129, and arginine 130. Serine 159, asparagine 160, glutamine 181, serine 211, leucine 213, glycine 215, glycine 261, threonine 262, asparagine 263, and arginine 267 together coordinate NADP(+).

This sequence belongs to the aldo/keto reductase family. In terms of assembly, homotrimer.

The catalysed reaction is D-glucose + NADP(+) = 6-dehydro-D-glucose + NADPH + H(+). Its function is as follows. Part of the sulfoquinovose monooxygenase (sulfo-SMO) pathway, a D-sulfoquinovose degradation pathway that enables the complete utilization of all carbons within sulfoquinovose (SQ) with concomitant production of inorganic sulfite. Catalyzes the NADP-dependent reduction of 6-dehydro-D-glucose to D-glucose. Cannot use NADH. The protein is 6-dehydroglucose reductase of Agrobacterium fabrum (strain C58 / ATCC 33970) (Agrobacterium tumefaciens (strain C58)).